Here is a 297-residue protein sequence, read N- to C-terminus: Protein-L-isoaspartate O-methyltransferase (297 aa).

The segment at 20–57 is disordered; the sequence is RKPAPARTAGMPAVGAPGPAQAQAKARDKQPSAPTAAA. A compositionally biased stretch (low complexity) spans 28-43; sequence AGMPAVGAPGPAQAQA. Serine 133 is a catalytic residue.

Belongs to the methyltransferase superfamily. L-isoaspartyl/D-aspartyl protein methyltransferase family.

It localises to the cytoplasm. It catalyses the reaction [protein]-L-isoaspartate + S-adenosyl-L-methionine = [protein]-L-isoaspartate alpha-methyl ester + S-adenosyl-L-homocysteine. In terms of biological role, catalyzes the methyl esterification of L-isoaspartyl residues in peptides and proteins that result from spontaneous decomposition of normal L-aspartyl and L-asparaginyl residues. It plays a role in the repair and/or degradation of damaged proteins. This Cupriavidus pinatubonensis (strain JMP 134 / LMG 1197) (Cupriavidus necator (strain JMP 134)) protein is Protein-L-isoaspartate O-methyltransferase.